Consider the following 194-residue polypeptide: Imidazoleglycerol-phosphate dehydratase (194 aa).

Belongs to the imidazoleglycerol-phosphate dehydratase family.

The protein resides in the cytoplasm. It catalyses the reaction D-erythro-1-(imidazol-4-yl)glycerol 3-phosphate = 3-(imidazol-4-yl)-2-oxopropyl phosphate + H2O. The protein operates within amino-acid biosynthesis; L-histidine biosynthesis; L-histidine from 5-phospho-alpha-D-ribose 1-diphosphate: step 6/9. This is Imidazoleglycerol-phosphate dehydratase from Bacillus cereus (strain ZK / E33L).